Here is a 251-residue protein sequence, read N- to C-terminus: Hydroxyacylglutathione hydrolase GloB (251 aa).

Zn(2+) contacts are provided by histidine 53, histidine 55, aspartate 57, histidine 58, histidine 110, and aspartate 127. Substrate-binding positions include 136 to 138, 165 to 167, and 245 to 248; these read RLF, HEY, and RSKK. Histidine 165 provides a ligand contact to Zn(2+).

Belongs to the metallo-beta-lactamase superfamily. Glyoxalase II family. As to quaternary structure, monomer. Requires Zn(2+) as cofactor.

It carries out the reaction an S-(2-hydroxyacyl)glutathione + H2O = a 2-hydroxy carboxylate + glutathione + H(+). It catalyses the reaction (R)-S-lactoylglutathione + H2O = (R)-lactate + glutathione + H(+). The protein operates within secondary metabolite metabolism; methylglyoxal degradation; (R)-lactate from methylglyoxal: step 2/2. With respect to regulation, is inhibited by Cu(2+). Type II glyoxalase that catalyzes the hydrolysis of (R)-S-lactoylglutathione to (R)-lactate and glutathione. Is more efficient than the isozyme GloC, and plays a major contribution to methylglyoxal (MG) detoxification in E.coli. The two isoenzymes have additive effects and ensure maximal MG degradation. In Escherichia coli (strain K12), this protein is Hydroxyacylglutathione hydrolase GloB.